A 144-amino-acid polypeptide reads, in one-letter code: uncharacterized protein (144 aa).

Residues 13-120 (IFCGIVEGNV…VPKYETGLGF (108 aa)) enclose the HIT domain. The Histidine triad motif signature appears at 105–109 (HYHMH).

This is an uncharacterized protein from Mycoplasma pneumoniae (strain ATCC 29342 / M129 / Subtype 1) (Mycoplasmoides pneumoniae).